We begin with the raw amino-acid sequence, 363 residues long: tRNA N6-adenosine threonylcarbamoyltransferase (363 aa).

Fe cation contacts are provided by His127 and His131. Substrate-binding positions include 150–154, Asp183, Gly196, and Asn290; that span reads LISGG. A Fe cation-binding site is contributed by Asp318.

The protein belongs to the KAE1 / TsaD family. Fe(2+) is required as a cofactor.

The protein localises to the cytoplasm. It catalyses the reaction L-threonylcarbamoyladenylate + adenosine(37) in tRNA = N(6)-L-threonylcarbamoyladenosine(37) in tRNA + AMP + H(+). In terms of biological role, required for the formation of a threonylcarbamoyl group on adenosine at position 37 (t(6)A37) in tRNAs that read codons beginning with adenine. Is involved in the transfer of the threonylcarbamoyl moiety of threonylcarbamoyl-AMP (TC-AMP) to the N6 group of A37, together with TsaE and TsaB. TsaD likely plays a direct catalytic role in this reaction. In Zymomonas mobilis subsp. mobilis (strain ATCC 31821 / ZM4 / CP4), this protein is tRNA N6-adenosine threonylcarbamoyltransferase.